Reading from the N-terminus, the 381-residue chain is Protein kinase gsk31 (381 aa).

One can recognise a Protein kinase domain in the interval 25-309 (YEPCRVLGSG…AIEVLTHPFF (285 aa)). ATP contacts are provided by residues 31-39 (LGSGSFGVV) and K54. The active-site Proton acceptor is D150. S184 carries the phosphoserine modification. Residue Y185 is modified to Phosphotyrosine.

Belongs to the protein kinase superfamily. CMGC Ser/Thr protein kinase family. GSK-3 subfamily.

It carries out the reaction L-seryl-[protein] + ATP = O-phospho-L-seryl-[protein] + ADP + H(+). It catalyses the reaction L-threonyl-[protein] + ATP = O-phospho-L-threonyl-[protein] + ADP + H(+). The polypeptide is Protein kinase gsk31 (gsk31) (Schizosaccharomyces pombe (strain 972 / ATCC 24843) (Fission yeast)).